The sequence spans 258 residues: Large ribosomal subunit protein uL15c (258 aa).

Residues 1–65 (MSAASLIPVS…NVKSSGENVR (65 aa)) constitute a chloroplast transit peptide. The disordered stretch occupies residues 67-90 (RLDNLGPQPGSRKRPKRKGRGIAA). Over residues 77–86 (SRKRPKRKGR) the composition is skewed to basic residues.

Belongs to the universal ribosomal protein uL15 family. Part of the 50S ribosomal subunit.

The protein localises to the plastid. Its subcellular location is the chloroplast. In Pisum sativum (Garden pea), this protein is Large ribosomal subunit protein uL15c (RPL15).